A 168-amino-acid chain; its full sequence is MKDNLVCMGIITSPHGIKGAVKVKIFTEKPENISLYGKLISGSKNYDIDSVSVIGENLVIATINGVNSRNEAEFLRNKKLYVERNKLLKLNDENEFYQSDLVNMEIRLENDELYGYIKSIYNFGSGDILEISVISTKKNIMLPFTKEIFPYVNIKERYITLNMPEFIG.

The PRC barrel domain maps to 93-167; the sequence is ENEFYQSDLV…YITLNMPEFI (75 aa).

The protein belongs to the RimM family. As to quaternary structure, binds ribosomal protein uS19.

It localises to the cytoplasm. Functionally, an accessory protein needed during the final step in the assembly of 30S ribosomal subunit, possibly for assembly of the head region. Essential for efficient processing of 16S rRNA. May be needed both before and after RbfA during the maturation of 16S rRNA. It has affinity for free ribosomal 30S subunits but not for 70S ribosomes. The polypeptide is Ribosome maturation factor RimM (Wolbachia sp. subsp. Brugia malayi (strain TRS)).